We begin with the raw amino-acid sequence, 221 residues long: Transcription factor MYB1 (221 aa).

HTH myb-type domains lie at 1-57 and 58-112; these read MESV…LNYL and RPNI…QKKL. 2 consecutive DNA-binding regions (H-T-H motif) follow at residues 33 to 57 and 85 to 108; these read WHQV…LNYL and WSLI…NTHL. The segment at 126 to 154 is disordered; the sequence is KTIVPKGTEAQPRAHPKSPPRPSPPSNNE.

Expressed in stems and leaves. Expressed at low levels in ovaries.

The protein localises to the nucleus. Functionally, transcription activator involved in the regulation of anthocyanin biosynthesis in red-fleshed kiwifruit varieties. Activates the transcription of genes involved in anthocyanin biosynthesis, such as dihydroflavonol reductase (DFR), anthocyanidin synthase (ANS) and UDP flavonoid glycosyltransferase (UFGT). The protein is Transcription factor MYB1 of Actinidia chinensis var. chinensis (Chinese soft-hair kiwi).